The following is a 315-amino-acid chain: Probable cell division protein WhiA (315 aa).

A DNA-binding region (H-T-H motif) is located at residues 275–309 (NLKELGEMVPSGVVSKSGINHRLRKINEIADKIRE).

It belongs to the WhiA family.

Functionally, involved in cell division and chromosome segregation. This Brevibacillus brevis (strain 47 / JCM 6285 / NBRC 100599) protein is Probable cell division protein WhiA.